Here is a 476-residue protein sequence, read N- to C-terminus: Vitamin D-binding protein (476 aa).

The signal sequence occupies residues 1–16 (MKRVLVLLLALAFGHA). Albumin domains are found at residues 17–208 (LERG…QMKQ), 209–394 (LLLL…LMKR), and 395–476 (QLTS…ILQS). 14 disulfide bridges follow: Cys29-Cys75, Cys74-Cys83, Cys96-Cys112, Cys111-Cys122, Cys145-Cys190, Cys189-Cys198, Cys220-Cys266, Cys265-Cys273, Cys286-Cys300, Cys299-Cys311, Cys335-Cys376, Cys375-Cys384, Cys407-Cys453, and Cys452-Cys462. Asn288 carries N-linked (GlcNAc...) asparagine glycosylation. Residue Ser434 is modified to Phosphoserine.

It belongs to the ALB/AFP/VDB family. In terms of assembly, associates with membrane-bound immunoglobulin on the surface of B-lymphocytes and with IgG Fc receptor on the membranes of T-lymphocytes. Interacts with LRP2; the interaction is required for renal uptake of GC in complex with 25-hydroxyvitamin D3.

It is found in the secreted. Involved in vitamin D transport and storage, scavenging of extracellular G-actin, enhancement of the chemotactic activity of C5 alpha for neutrophils in inflammation and macrophage activation. The polypeptide is Vitamin D-binding protein (Gc) (Rattus norvegicus (Rat)).